A 51-amino-acid polypeptide reads, in one-letter code: Large ribosomal subunit protein bL33 (51 aa).

Belongs to the bacterial ribosomal protein bL33 family.

The polypeptide is Large ribosomal subunit protein bL33 (Ruthia magnifica subsp. Calyptogena magnifica).